The following is a 484-amino-acid chain: Phospholipase A1-Ialpha2, chloroplastic (484 aa).

A chloroplast-targeting transit peptide spans 1–63; that stretch reads MALIQNPNMK…LAPVILNSPV (63 aa). A GXSXG motif is present at residues 295 to 299; it reads GHSMG. Residue Ser297 is the Acyl-ester intermediate of the active site. Active-site charge relay system residues include Asp360 and His411.

This sequence belongs to the AB hydrolase superfamily. Lipase family. In terms of tissue distribution, ubiquitous. Highest expression in flowers and leaves.

The protein localises to the plastid. It localises to the chloroplast. It is found in the plastoglobule. It catalyses the reaction a 1,2-diacyl-3-O-[alpha-D-galactosyl-(1-&gt;6)-beta-D-galactosyl]-sn-glycerol + H2O = acyl-3-O-[alpha-D-galactosyl-(1-&gt;6)-beta-D-galactosyl]-sn-glycerol + a fatty acid + H(+). The catalysed reaction is a 1,2-diacyl-3-O-(beta-D-galactosyl)-sn-glycerol + H2O = an acyl-3-O-(beta-D-galactosyl)-sn-glycerol + a fatty acid + H(+). Acylhydrolase that catalyzes the hydrolysis of phosphatidylcholine at the sn-1 position. Has a strong galactolipase activity toward monogalactosyldiacylglycerol (MGDG) and digalactosyldiacylglycerol (DGDG). Low triacylglycerol (TAG) lipase activity. Plays a role in plant growth and in leaf senescence. The chain is Phospholipase A1-Ialpha2, chloroplastic from Arabidopsis thaliana (Mouse-ear cress).